Consider the following 639-residue polypeptide: UvrABC system protein C (639 aa).

The region spanning 20 to 97 (ERSGVYRMFD…IKKFQPKFNI (78 aa)) is the GIY-YIG domain. The UVR domain maps to 207-242 (KELQENLSRKMEELSSQMRFEEAAEIRDRIKALSYV).

Belongs to the UvrC family. In terms of assembly, interacts with UvrB in an incision complex.

It localises to the cytoplasm. Functionally, the UvrABC repair system catalyzes the recognition and processing of DNA lesions. UvrC both incises the 5' and 3' sides of the lesion. The N-terminal half is responsible for the 3' incision and the C-terminal half is responsible for the 5' incision. The protein is UvrABC system protein C of Rickettsia conorii (strain ATCC VR-613 / Malish 7).